Reading from the N-terminus, the 268-residue chain is MRGAFYIAIALLVVRSRTATEIDPTDISEPYLNVVAIGGEDTRTTPKRYLRDGLAHSAANEERVKANVLSKSAKTLAAETEDWLRLSLSIGGHSHTPKSKRKVNLSPAKSQSGIRKKSTSINKRNYDKQVQADDPRLPEYLQIHQTFLKIPGMPHKMSLTEAVVMYGMVNRKVASKPGTKKNNEPLLRLMERSKWEDFENALDPMFMRLAPHEEMRKEYFHRLHTMYAKVYTFCHAHPSACTNKRAVSPLEKMIKVQKTKALLPLFKS.

Residues methionine 1–alanine 19 form the signal peptide. A RxLR-dEER motif is present at residues arginine 48–arginine 63. Positions isoleucine 90 to lysine 123 are disordered. A compositionally biased stretch (polar residues) spans proline 107 to lysine 123.

Belongs to the RxLR effector family.

The protein resides in the secreted. Its subcellular location is the host nucleus. It localises to the host cytoplasm. Secreted effector that completely suppresses the host cell death induced by cell death-inducing proteins. This chain is Secreted RxLR effector protein 6, found in Plasmopara viticola (Downy mildew of grapevine).